The following is a 556-amino-acid chain: F-box protein YDR131C (556 aa).

An F-box domain is found at 1-44; it reads MFDKLPYEIFKQIAWRIPQEDKISLTYVCKRSYESIIPFIYQNL.

Interacts with SKP1. Component of the probable SCF(YDR131C) complex containing CDC53, SKP1, RBX1 and YDR131C.

It localises to the vacuole. The protein operates within protein modification; protein ubiquitination. Substrate recognition component of a SCF (SKP1-CUL1-F-box protein) E3 ubiquitin-protein ligase complex which mediates the ubiquitination and subsequent proteasomal degradation of target proteins. Probably recognizes and binds to phosphorylated target proteins. This Saccharomyces cerevisiae (strain ATCC 204508 / S288c) (Baker's yeast) protein is F-box protein YDR131C.